The following is a 185-amino-acid chain: MFPLNFHYEDVSRQDPLLNRITPTLWKFLGSCEIRVVPNGPYNFIIKNGKLAMEIPRGQKFIQTQRGSTGKSFRSNPFLGSNKDKGYVSDLARQSTLRGHGMSNFSVRISTVMSLLDFPVEIRKNSIQFSMETEFCEFAPQLQDHFEIFEHIRGFNVTIVTSANTQDETLPLWSGFLQKDEGETQ.

It belongs to the universal ribosomal protein uL5 family.

It is found in the mitochondrion. The polypeptide is Large ribosomal subunit protein uL5m (RPL5) (Brassica napus (Rape)).